Reading from the N-terminus, the 252-residue chain is MAADETSTDFGFARVPLDEKQGRVNEVFRSVARRYDVMNDLMSGGLHRAWKSALISALRPSRTRPFRLLDVAGGTGDIAFRALQAGGPETHVTVLDINDAMLAVGRERAGDRFAGRIDFVAGNAEALPLPDGSFDAYTIAFGIRNVPRIERALAEAYRVLQPGGRFLCLEFSHVDVPGLDRIYDAYSFRIIPHLGALVAGDRESYRYLVESIRRFPTPGAFAGMIEEAGFAHVTHRLLSGGICAIHSGWKIA.

Residues T75, D96, and 123-124 (NA) each bind S-adenosyl-L-methionine.

It belongs to the class I-like SAM-binding methyltransferase superfamily. MenG/UbiE family.

It carries out the reaction a 2-demethylmenaquinol + S-adenosyl-L-methionine = a menaquinol + S-adenosyl-L-homocysteine + H(+). The enzyme catalyses a 2-methoxy-6-(all-trans-polyprenyl)benzene-1,4-diol + S-adenosyl-L-methionine = a 5-methoxy-2-methyl-3-(all-trans-polyprenyl)benzene-1,4-diol + S-adenosyl-L-homocysteine + H(+). It participates in quinol/quinone metabolism; menaquinone biosynthesis; menaquinol from 1,4-dihydroxy-2-naphthoate: step 2/2. It functions in the pathway cofactor biosynthesis; ubiquinone biosynthesis. Its function is as follows. Methyltransferase required for the conversion of demethylmenaquinol (DMKH2) to menaquinol (MKH2) and the conversion of 2-polyprenyl-6-methoxy-1,4-benzoquinol (DDMQH2) to 2-polyprenyl-3-methyl-6-methoxy-1,4-benzoquinol (DMQH2). This Methylobacterium nodulans (strain LMG 21967 / CNCM I-2342 / ORS 2060) protein is Ubiquinone/menaquinone biosynthesis C-methyltransferase UbiE.